The sequence spans 215 residues: MSKVYDWFEERLEIQAIADDITSKYVPPHVNIFHCLGGITLTCFLVQVATGFAMTFYYRPTVTEAFASVQYIMTEANFGWLIRSVHRWSASMMVLMMILHVFRVYLTGGFKKPRELTWVTGVVLAVLTASFGVTGYSLPWDQIGYWAVKIVTGVPEAIPIVGSPLVELLRGSASVGQSTLTRFYSLHTFVLPLLTAVFMLMHFSMIRKQGISGPL.

Residues I32–F52 form a helical membrane-spanning segment. Residue C35 coordinates heme c. Residues H86 and H100 each coordinate heme b. Transmembrane regions (helical) follow at residues A90 to F110, L116 to Y136, and L186 to I206. Residues H187 and H202 each coordinate heme b.

This sequence belongs to the cytochrome b family. PetB subfamily. In terms of assembly, the 4 large subunits of the cytochrome b6-f complex are cytochrome b6, subunit IV (17 kDa polypeptide, PetD), cytochrome f and the Rieske protein, while the 4 small subunits are PetG, PetL, PetM and PetN. The complex functions as a dimer. Requires heme b as cofactor. Heme c is required as a cofactor.

Its subcellular location is the plastid. It is found in the chloroplast thylakoid membrane. Component of the cytochrome b6-f complex, which mediates electron transfer between photosystem II (PSII) and photosystem I (PSI), cyclic electron flow around PSI, and state transitions. The sequence is that of Cytochrome b6 from Nymphaea alba (White water-lily).